The primary structure comprises 879 residues: Alanine--tRNA ligase (879 aa).

4 residues coordinate Zn(2+): His565, His569, Cys674, and His678.

Belongs to the class-II aminoacyl-tRNA synthetase family. Requires Zn(2+) as cofactor.

It is found in the cytoplasm. The catalysed reaction is tRNA(Ala) + L-alanine + ATP = L-alanyl-tRNA(Ala) + AMP + diphosphate. Catalyzes the attachment of alanine to tRNA(Ala) in a two-step reaction: alanine is first activated by ATP to form Ala-AMP and then transferred to the acceptor end of tRNA(Ala). Also edits incorrectly charged Ser-tRNA(Ala) and Gly-tRNA(Ala) via its editing domain. The sequence is that of Alanine--tRNA ligase from Gluconobacter oxydans (strain 621H) (Gluconobacter suboxydans).